We begin with the raw amino-acid sequence, 197 residues long: dTTP/UTP pyrophosphatase (197 aa).

Catalysis depends on Asp-70, which acts as the Proton acceptor.

Belongs to the Maf family. YhdE subfamily. It depends on a divalent metal cation as a cofactor.

It localises to the cytoplasm. It carries out the reaction dTTP + H2O = dTMP + diphosphate + H(+). The enzyme catalyses UTP + H2O = UMP + diphosphate + H(+). In terms of biological role, nucleoside triphosphate pyrophosphatase that hydrolyzes dTTP and UTP. May have a dual role in cell division arrest and in preventing the incorporation of modified nucleotides into cellular nucleic acids. The sequence is that of dTTP/UTP pyrophosphatase from Methanosarcina mazei (strain ATCC BAA-159 / DSM 3647 / Goe1 / Go1 / JCM 11833 / OCM 88) (Methanosarcina frisia).